The primary structure comprises 142 residues: Peptide methionine sulfoxide reductase MsrB (142 aa).

The region spanning 13-135 (EKDWKVELSE…NSLSMTFKGE (123 aa)) is the MsrB domain. Residues Cys-52, Cys-55, Cys-101, and Cys-104 each coordinate Zn(2+). The active-site Nucleophile is Cys-124.

Belongs to the MsrB Met sulfoxide reductase family. The cofactor is Zn(2+).

It carries out the reaction L-methionyl-[protein] + [thioredoxin]-disulfide + H2O = L-methionyl-(R)-S-oxide-[protein] + [thioredoxin]-dithiol. The sequence is that of Peptide methionine sulfoxide reductase MsrB from Alteromonas mediterranea (strain DSM 17117 / CIP 110805 / LMG 28347 / Deep ecotype).